Here is a 58-residue protein sequence, read N- to C-terminus: Large ribosomal subunit protein eL20 (58 aa).

The segment at 37-58 is disordered; the sequence is TTVGSQHNRKRPQIEIKEVSAA. Over residues 48-58 the composition is skewed to basic and acidic residues; it reads PQIEIKEVSAA.

Belongs to the eukaryotic ribosomal protein eL20 family. Part of the 50S ribosomal subunit. Binds 23S rRNA.

This is Large ribosomal subunit protein eL20 from Halorubrum lacusprofundi (strain ATCC 49239 / DSM 5036 / JCM 8891 / ACAM 34).